A 147-amino-acid chain; its full sequence is Nucleoside diphosphate kinase (147 aa).

ATP is bound by residues Lys-9, Phe-57, Arg-85, Thr-91, Arg-102, and Asn-112. The Pros-phosphohistidine intermediate role is filled by His-115.

This sequence belongs to the NDK family. As to quaternary structure, homotetramer. Mg(2+) is required as a cofactor.

It is found in the cytoplasm. It carries out the reaction a 2'-deoxyribonucleoside 5'-diphosphate + ATP = a 2'-deoxyribonucleoside 5'-triphosphate + ADP. The enzyme catalyses a ribonucleoside 5'-diphosphate + ATP = a ribonucleoside 5'-triphosphate + ADP. Functionally, major role in the synthesis of nucleoside triphosphates other than ATP. The ATP gamma phosphate is transferred to the NDP beta phosphate via a ping-pong mechanism, using a phosphorylated active-site intermediate. The chain is Nucleoside diphosphate kinase from Thermosipho africanus (strain TCF52B).